The sequence spans 177 residues: ADP-ribose 1''-phosphate phosphatase (177 aa).

A Macro domain is found at 1-177 (MSNITYVKGN…GDMSFTVYQL (177 aa)). Residues 9–11 (GNI), 24–26 (SCN), 31–36 (WGGGIA), and 147–153 (INSGIFG) contribute to the substrate site.

The protein belongs to the POA1 family.

The catalysed reaction is ADP-alpha-D-ribose 1''-phosphate + H2O = ADP-D-ribose + phosphate. Its function is as follows. Highly specific phosphatase involved in the metabolism of ADP-ribose 1''-phosphate (Appr1p) which is produced as a consequence of tRNA splicing. Removes ADP-ribose from glutamate residues in proteins bearing a single ADP-ribose moiety. Inactive towards proteins bearing poly-ADP-ribose. This chain is ADP-ribose 1''-phosphate phosphatase (POA1), found in Saccharomyces cerevisiae (strain YJM789) (Baker's yeast).